The chain runs to 118 residues: MKIVALTLVAFVALAGASCPYAAPAQAYSAPAAPSGYPAPPCPTNYLFSCQPNLAPAPCAQEAQAPAYGSAGAYTEQVPRYVGSPNREQVQQFHQRIGMAALMEELRGLGQGIQGQQY.

The signal sequence occupies residues 1–17 (MKIVALTLVAFVALAGA). In terms of domain architecture, VM spans 36–75 (GYPAPPCPTNYLFSCQPNLAPAPCAQEAQAPAYGSAGAYT).

Belongs to the vitelline membrane family.

The protein resides in the secreted. Its function is as follows. Major early eggshell protein. The chain is Vitelline membrane protein Vm32E from Drosophila sechellia (Fruit fly).